The primary structure comprises 306 residues: MKHLISMKDIGKEEILEILDEARKMEELLNTKRPLKLLEGKILATVFYEPSTRTRLSFETAMKRLGGEVITMTDLKSSSVAKGESLIDTIRVISGYADIIVLRHPSEGAARLASEYSQVPIINAGDGSNQHPTQTLLDLYTIMREIGRIDGIKIAFVGDLKYGRTVHSLVYALSLFENVEMYFVSPKELRLPKDIIEDLKAKNIKFYEKESLDDLDDDIDVLYVTRIQKERFPDPNEYEKVKGSYKIKREYVEGKKFIIMHPLPRVDEIDYDVDDLPQAKYFKQSFYGIPVRMAILKKLIEDNEGE.

Carbamoyl phosphate is bound by residues R53 and T54. K82 serves as a coordination point for L-aspartate. Carbamoyl phosphate is bound by residues R103, H131, and Q134. The L-aspartate site is built by R164 and R226. Carbamoyl phosphate is bound by residues L263 and P264.

This sequence belongs to the aspartate/ornithine carbamoyltransferase superfamily. ATCase family. As to quaternary structure, heterododecamer (2C3:3R2) of six catalytic PyrB chains organized as two trimers (C3), and six regulatory PyrI chains organized as three dimers (R2).

The enzyme catalyses carbamoyl phosphate + L-aspartate = N-carbamoyl-L-aspartate + phosphate + H(+). The protein operates within pyrimidine metabolism; UMP biosynthesis via de novo pathway; (S)-dihydroorotate from bicarbonate: step 2/3. Its function is as follows. Catalyzes the condensation of carbamoyl phosphate and aspartate to form carbamoyl aspartate and inorganic phosphate, the committed step in the de novo pyrimidine nucleotide biosynthesis pathway. This Methanocaldococcus jannaschii (strain ATCC 43067 / DSM 2661 / JAL-1 / JCM 10045 / NBRC 100440) (Methanococcus jannaschii) protein is Aspartate carbamoyltransferase catalytic subunit.